The following is an 82-amino-acid chain: Protein transport protein SBH1 (82 aa).

The tract at residues 1 to 36 (MSSPTPPGGQRTLQKRKQGSSQKVAASAPKKNTNSN) is disordered. At 1-53 (MSSPTPPGGQRTLQKRKQGSSQKVAASAPKKNTNSNNSILKIYSDEATGLRVD) the chain is on the cytoplasmic side. Residues 19 to 36 (GSSQKVAASAPKKNTNSN) are compositionally biased toward polar residues. The chain crosses the membrane as a helical span at residues 54–74 (PLVVLFLAVGFIFSVVALHVI).

This sequence belongs to the SEC61-beta family. In terms of assembly, component of the heterotrimeric Sec61 complex, which is composed of SSH1, SBH1 and SSS1. Presumably three to four Sec61 heterotrimers assemble into an oligomeric ring with a central aqueous pore. In cotranslational ER import, the pore diameter varies from 9-15 A in a ribosome-free resting state to 40-60 A in a functional state when associated with the ribosome. The Sec61 complex is part of a channel-forming translocon complex whose composition seem to change dependent upon different functional states. During post-translational ER import the Sec61 complex associates with the Sec62/63 complex to form the Sec complex. SBH1 interacts OST2, OST4 and WBP1 components of the OT complex.

It is found in the endoplasmic reticulum membrane. In terms of biological role, part of the Sec61 complex, which is the major component of a channel-forming translocon complex that mediates protein translocation across the endoplasmic reticulum (ER). The functional states of the translocon complex include co- and post-translational ER import, cotranslational membrane protein integration and retrograde transport of misfolded proteins out of the ER. In the cotranslational pathway, ribosomes synthesizing presecretory proteins are targeted to the translocon by the cytosolic signal recognition particle (SRP) and its ER-localized receptor. The association of the Sec61 complex with the ribosome is mediated by the 28S rRNA of the large ribosomal subunit. SRP-independent post-translational translocation requires the association of additional factors, such as the Sec62/63 complex and KAR2. The protein is Protein transport protein SBH1 (SBH1) of Saccharomyces cerevisiae (strain ATCC 204508 / S288c) (Baker's yeast).